We begin with the raw amino-acid sequence, 743 residues long: Mitochondrial exoribonuclease DSS-1 (743 aa).

The N-terminal 67 residues, 1 to 67 (MTPRRVAKLV…KELLHLQRSL (67 aa)), are a transit peptide targeting the mitochondrion. In terms of domain architecture, RNB spans 186-542 (THNPAYAIDS…VHHQLKVWLW (357 aa)). Residues 320–357 (VGNQHHHTERESTQASPAKREEGKKGMVASGGTSSCRP) form a disordered region. Residues 325–344 (HHTERESTQASPAKREEGKK) show a composition bias toward basic and acidic residues.

The protein belongs to the RNR ribonuclease family. As to quaternary structure, component of the mitochondrial 3' processome (MPsome) complex composed at least of terminal uridylyltransferase KRET1/TUT1, 3'-5' exonuclease DSS1, MPSS1, MPSS2 and MPSS3. Within the complex, interacts with KRET1 and MPSS2. Component of the mitochondrial degradosome complex composed at least of 3'-5' exonuclease DSS1 and helicase SUV3. Within the complex, interacts with helicase SUV3.

The protein localises to the mitochondrion. It catalyses the reaction Exonucleolytic cleavage in the 3'- to 5'-direction to yield nucleoside 5'-phosphates.. 3'-5'exoribonuclease which is involved in the post-transcriptional processing, editing and degradation of mitochondrial RNAs, including mRNAs, rRNAs and guided RNAs (gRNA). As part of the mitochondrial 3' processome (MPsome), involved in the maturation of guided RNA (gRNA) precursors by catalyzing the processive 3'-5' degradation of uridylated gRNA precursors. Plays a role in the degradation of 12S rRNA processing intermediates and maturation by-products. The sequence is that of Mitochondrial exoribonuclease DSS-1 from Trypanosoma brucei brucei.